Consider the following 202-residue polypeptide: Small ribosomal subunit protein uS4c (202 aa).

Residues 90-148 (MRLDNVIFRLGMSSTIPGARQLVNHRHIMINDEMVDTPGYNCKPRDIITLKNISESRSG) form the S4 RNA-binding domain.

It belongs to the universal ribosomal protein uS4 family. As to quaternary structure, part of the 30S ribosomal subunit. Contacts protein S5. The interaction surface between S4 and S5 is involved in control of translational fidelity.

It localises to the plastid. The protein localises to the chloroplast. Functionally, one of the primary rRNA binding proteins, it binds directly to 16S rRNA where it nucleates assembly of the body of the 30S subunit. With S5 and S12 plays an important role in translational accuracy. In Haplomitrium hookeri (Hooker's flapwort), this protein is Small ribosomal subunit protein uS4c (rps4).